A 294-amino-acid chain; its full sequence is uncharacterized protein (294 aa).

The Tyrosine-protein phosphatase domain occupies 13–151 (QCSQIRPYLY…LIDLEQKLRG (139 aa)). Cysteine 95 acts as the Phosphocysteine intermediate in catalysis. Residues 234 to 294 (PTLLVPSSSS…WRLSFHKDVV (61 aa)) form a disordered region.

The protein belongs to the protein-tyrosine phosphatase family. Non-receptor class dual specificity subfamily.

This is an uncharacterized protein from Caenorhabditis elegans.